Consider the following 265-residue polypeptide: Phosphate import ATP-binding protein PstB (265 aa).

The ABC transporter domain maps to 18–260 (MECRDCHVYY…PEDPRTESYI (243 aa)). 50-57 (GPSGCGKS) lines the ATP pocket.

Belongs to the ABC transporter superfamily. Phosphate importer (TC 3.A.1.7) family. As to quaternary structure, the complex is composed of two ATP-binding proteins (PstB), two transmembrane proteins (PstC and PstA) and a solute-binding protein (PstS).

It localises to the cell inner membrane. The catalysed reaction is phosphate(out) + ATP + H2O = ADP + 2 phosphate(in) + H(+). Part of the ABC transporter complex PstSACB involved in phosphate import. Responsible for energy coupling to the transport system. The protein is Phosphate import ATP-binding protein PstB of Ruegeria pomeroyi (strain ATCC 700808 / DSM 15171 / DSS-3) (Silicibacter pomeroyi).